A 404-amino-acid polypeptide reads, in one-letter code: uncharacterized protein (404 aa).

This is an uncharacterized protein from Mycoplasma genitalium (strain ATCC 33530 / DSM 19775 / NCTC 10195 / G37) (Mycoplasmoides genitalium).